Here is an 89-residue protein sequence, read N- to C-terminus: MTLLASISTIGNVKSISKSNNFSSLSNSSLQSSNSIQCGGCGGGNSLIGTVGGLVGGVLVGTGIIVGTVIGTVNGVVGGLLSGPSCGCH.

The protein belongs to the hssA/B family.

This is HssA/B-like protein 14 (hssl14) from Dictyostelium discoideum (Social amoeba).